Here is a 264-residue protein sequence, read N- to C-terminus: tRNA pseudouridine synthase A (264 aa).

Asp51 acts as the Nucleophile in catalysis. A substrate-binding site is contributed by Tyr109.

This sequence belongs to the tRNA pseudouridine synthase TruA family. In terms of assembly, homodimer.

It carries out the reaction uridine(38/39/40) in tRNA = pseudouridine(38/39/40) in tRNA. In terms of biological role, formation of pseudouridine at positions 38, 39 and 40 in the anticodon stem and loop of transfer RNAs. The sequence is that of tRNA pseudouridine synthase A from Vibrio vulnificus (strain CMCP6).